We begin with the raw amino-acid sequence, 146 residues long: Large ribosomal subunit protein uL15 (146 aa).

Residues 1-56 are disordered; sequence MKLHELKAAEGANKASKRVGRGTGSGLGKTSGKGQNGQNSRSGGGVRPGFEGGQMP. Composition is skewed to gly residues over residues 21 to 35 and 42 to 52; these read RGTG…GKGQ and SGGGVRPGFEG.

This sequence belongs to the universal ribosomal protein uL15 family. As to quaternary structure, part of the 50S ribosomal subunit.

Functionally, binds to the 23S rRNA. The chain is Large ribosomal subunit protein uL15 from Clostridium botulinum (strain Langeland / NCTC 10281 / Type F).